The sequence spans 256 residues: 3-methyl-2-oxobutanoate hydroxymethyltransferase (256 aa).

Residues aspartate 42 and aspartate 86 each coordinate Mg(2+). 3-methyl-2-oxobutanoate is bound by residues 42–43, aspartate 86, and lysine 116; that span reads DS. Mg(2+) is bound at residue glutamate 118. The active-site Proton acceptor is glutamate 185.

The protein belongs to the PanB family. Homodecamer; pentamer of dimers. The cofactor is Mg(2+).

It is found in the cytoplasm. It catalyses the reaction 3-methyl-2-oxobutanoate + (6R)-5,10-methylene-5,6,7,8-tetrahydrofolate + H2O = 2-dehydropantoate + (6S)-5,6,7,8-tetrahydrofolate. The protein operates within cofactor biosynthesis; (R)-pantothenate biosynthesis; (R)-pantoate from 3-methyl-2-oxobutanoate: step 1/2. Its function is as follows. Catalyzes the reversible reaction in which hydroxymethyl group from 5,10-methylenetetrahydrofolate is transferred onto alpha-ketoisovalerate to form ketopantoate. The protein is 3-methyl-2-oxobutanoate hydroxymethyltransferase of Prochlorococcus marinus (strain SARG / CCMP1375 / SS120).